The following is a 618-amino-acid chain: Dihydroxy-acid dehydratase (618 aa).

Asp-81 serves as a coordination point for Mg(2+). Cys-122 is a [2Fe-2S] cluster binding site. Mg(2+)-binding residues include Asp-123 and Lys-124. Lys-124 is modified (N6-carboxylysine). Residue Cys-195 coordinates [2Fe-2S] cluster. Glu-491 is a Mg(2+) binding site. The Proton acceptor role is filled by Ser-517.

Belongs to the IlvD/Edd family. As to quaternary structure, homodimer. Requires [2Fe-2S] cluster as cofactor. Mg(2+) is required as a cofactor.

The enzyme catalyses (2R)-2,3-dihydroxy-3-methylbutanoate = 3-methyl-2-oxobutanoate + H2O. It catalyses the reaction (2R,3R)-2,3-dihydroxy-3-methylpentanoate = (S)-3-methyl-2-oxopentanoate + H2O. It participates in amino-acid biosynthesis; L-isoleucine biosynthesis; L-isoleucine from 2-oxobutanoate: step 3/4. It functions in the pathway amino-acid biosynthesis; L-valine biosynthesis; L-valine from pyruvate: step 3/4. Functionally, functions in the biosynthesis of branched-chain amino acids. Catalyzes the dehydration of (2R,3R)-2,3-dihydroxy-3-methylpentanoate (2,3-dihydroxy-3-methylvalerate) into 2-oxo-3-methylpentanoate (2-oxo-3-methylvalerate) and of (2R)-2,3-dihydroxy-3-methylbutanoate (2,3-dihydroxyisovalerate) into 2-oxo-3-methylbutanoate (2-oxoisovalerate), the penultimate precursor to L-isoleucine and L-valine, respectively. This is Dihydroxy-acid dehydratase from Rhodopseudomonas palustris (strain ATCC BAA-98 / CGA009).